Consider the following 695-residue polypeptide: Follicle-stimulating hormone receptor (695 aa).

Positions 1–17 are cleaved as a signal peptide; sequence MALLLVALLAFLSLGSG. 2 cysteine pairs are disulfide-bonded: cysteine 18–cysteine 25 and cysteine 23–cysteine 32. The LRRNT domain maps to 18–46; the sequence is CHHRLCHCSNGVFLCQESKVTEIPSDLPR. The Extracellular portion of the chain corresponds to 18 to 366; it reads CHHRLCHCSN…EDIMGDDILR (349 aa). LRR repeat units follow at residues 49–72, 73–97, 98–118, 119–143, 144–169, 170–192, 193–216, 217–240, and 241–259; these read VELR…FGDL, EKIE…LPKL, HEIR…AFQN, LPNL…KIQS, LQKV…MGLS, FESM…AFNG, TQLD…VFQG, ASGP…GLEN, and LKKL…PSLE. Asparagine 191 and asparagine 199 each carry an N-linked (GlcNAc...) asparagine glycan. Intrachain disulfides connect cysteine 275-cysteine 346, cysteine 276-cysteine 292, cysteine 276-cysteine 356, and cysteine 292-cysteine 338. Asparagine 293 carries N-linked (GlcNAc...) asparagine glycosylation. Tyrosine 335 is modified (sulfotyrosine). Residues 367-387 traverse the membrane as a helical segment; it reads VLIWFISILAITGNILVLVIL. The Cytoplasmic portion of the chain corresponds to 388 to 398; it reads ITSQYKLTVPR. A helical transmembrane segment spans residues 399-421; the sequence is FLMCNLAFADLCIGIYLLLIASV. Residues 422–443 lie on the Extracellular side of the membrane; it reads DVHTKTEYHNYAIDWQTGAGCD. Cysteine 442 and cysteine 517 form a disulfide bridge. A helical transmembrane segment spans residues 444–465; the sequence is AAGFFTVFASELSVYTLTAITL. At 466–485 the chain is on the cytoplasmic side; it reads ERWHTITHAMQLECKVQLRH. The helical transmembrane segment at 486–508 threads the bilayer; sequence AASIMLVGWIFAFAVALFPIFGI. The Extracellular segment spans residues 509 to 528; the sequence is SSYMKVSICLPMDIDSPLSQ. A helical membrane pass occupies residues 529 to 550; sequence LYVMSLLVLNVLAFVVICGCYT. Residues 551-573 lie on the Cytoplasmic side of the membrane; it reads HIYLTVRNPNITSSSSDTKIAKR. Residues 574–597 traverse the membrane as a helical segment; the sequence is MAMLIFTDFLCMAPISFFAISASL. Residues 598-608 are Extracellular-facing; sequence KVPLITVSKSK. Residues 609 to 630 form a helical membrane-spanning segment; sequence ILLVLFYPINSCANPFLYAIFT. Over 631–695 the chain is Cytoplasmic; sequence KNFRRDFFIL…LIPLRHLAKN (65 aa).

It belongs to the G-protein coupled receptor 1 family. FSH/LSH/TSH subfamily. As to quaternary structure, homotrimer. Functions as a homotrimer binding the FSH hormone heterodimer composed of CGA and FSHB. Interacts with ARRB2. Interacts with APPL2; interaction is independent of follicle stimulating hormone stimulation. Post-translationally, N-glycosylated; indirectly required for FSH-binding, possibly via a conformational change that allows high affinity binding of hormone. In terms of processing, sulfated.

The protein resides in the cell membrane. Its function is as follows. G protein-coupled receptor for follitropin, the follicle-stimulating hormone. Through cAMP production activates the downstream PI3K-AKT and ERK1/ERK2 signaling pathways. The protein is Follicle-stimulating hormone receptor (FSHR) of Bos taurus (Bovine).